Consider the following 639-residue polypeptide: CD2-associated protein (639 aa).

One can recognise an SH3 1; truncated domain in the interval 1 to 59 (MVDYIVEYDYDAVHDDELTIRVGEIIRNVKKLQEEGWLEGELNGRRGMFPDNFVKEIKR). The interaction with ANLN and localization to the midbody stretch occupies residues 1-175 (MVDYIVEYDY…EVTDDGETHE (175 aa)). Lys58 is covalently cross-linked (Glycyl lysine isopeptide (Lys-Gly) (interchain with G-Cter in SUMO2)). Phosphoserine occurs at positions 67, 80, and 86. In terms of domain architecture, SH3 2 spans 108–167 (TKKRQCKVLFEYIPQNEDELELKVGDIIDINEEVEEGWWSGTLNNKLGLFPSNFVKELEV). Positions 168 to 177 (TDDGETHEAQ) are enriched in basic and acidic residues. The disordered stretch occupies residues 168 to 209 (TDDGETHEAQDDSETVLAGPTSPIPSLGNVSETASGSVTQPK). Positions 195–207 (GNVSETASGSVTQ) are enriched in polar residues. The residue at position 224 (Ser224) is a Phosphoserine. The disordered stretch occupies residues 227–256 (LRTRTSSSETEEKKPEKPLILQSLGPKTQS). Residues 269–330 (KAKEYCRTLF…PDNFAVQINE (62 aa)) enclose the SH3 3 domain. Positions 333 to 428 (KDFPKPKKPP…PPPPIAKING (96 aa)) are disordered. Short sequence motifs (SH3-binding) lie at residues 336–352 (PKPKKPPPPAKAPAPKP), 378–397 (KPSKPAAPQVPPKKPTPPTK), and 410–422 (PKRPEKPVPPPPP). Over residues 341-351 (PPPPAKAPAPK) the composition is skewed to pro residues. Over residues 356 to 379 (AAEKKYFSLKPEEKDEKSTLEQKP) the composition is skewed to basic and acidic residues. Residues 385–395 (PQVPPKKPTPP) show a composition bias toward pro residues. A phosphoserine mark is found at Ser458, Ser463, Ser469, Ser510, and Ser514. Residue Lys523 forms a Glycyl lysine isopeptide (Lys-Gly) (interchain with G-Cter in SUMO2) linkage. Thr565 carries the post-translational modification Phosphothreonine. Residues 577–638 (DVKKNSLDEL…IEKLKKAVLS (62 aa)) are a coiled coil. Position 582 is a phosphoserine (Ser582).

In terms of assembly, homodimer. Interacts with F-actin, PKD2, NPHS1 and NPHS2. Interacts with WTIP. Interacts with DDN; interaction is direct. Interacts (via SH3 2 domain) with CBL (via phosphorylated C-terminus). Interacts with BCAR1/p130Cas (via SH3 domain). Interacts with MVB12A and ARHGAP17. Interacts with ANLN, CD2 and CBLB. Interacts with PDCD6IP and TSG101. Interacts with RIN3. Interacts directly with RET (inactive) and CBLC; upon RET activation by GDNF suggested to dissociate from RET as CBLC:CD2AP complex. Interacts with CGNL1 and SH3BP1; probably part of a complex at cell junctions. Interacts with CAPZA1. (Microbial infection) Interacts (via SH3 domains) with Chikungunya virus non-structural protein 3 (via C-terminus); this interaction plays a role in initiation of viral replication. Phosphorylated on tyrosine residues; probably by c-Abl, Fyn and c-Src. Widely expressed in fetal and adult tissues.

It is found in the cytoplasm. The protein localises to the cytoskeleton. Its subcellular location is the cell projection. The protein resides in the ruffle. It localises to the cell junction. Functionally, seems to act as an adapter protein between membrane proteins and the actin cytoskeleton. In collaboration with CBLC, modulates the rate of RET turnover and may act as regulatory checkpoint that limits the potency of GDNF on neuronal survival. Controls CBLC function, converting it from an inhibitor to a promoter of RET degradation. May play a role in receptor clustering and cytoskeletal polarity in the junction between T-cell and antigen-presenting cell. May anchor the podocyte slit diaphragm to the actin cytoskeleton in renal glomerolus. Also required for cytokinesis. Plays a role in epithelial cell junctions formation. This is CD2-associated protein (CD2AP) from Homo sapiens (Human).